Here is a 506-residue protein sequence, read N- to C-terminus: UBX domain-containing protein 4 (506 aa).

Residues 1-199 (MLWFQGAIPA…PAEDLTVRVE (199 aa)) form an interaction with UBQLN1 region. At 1 to 411 (MLWFQGAIPA…VPSSSGDIWT (411 aa)) the chain is on the cytoplasmic side. Composition is skewed to polar residues over residues 114-136 (SLKGETSVTNDKQSESSVSTPSA) and 177-189 (SLSQEPPGCSNQR). Residues 114-193 (SLKGETSVTN…GCSNQRPAED (80 aa)) are disordered. Residues 313 to 391 (DRSTIARIQF…ELAPSASVVL (79 aa)) enclose the UBX domain. An intramembrane segment occupies 412–432 (LLGTVLYPFLAIWRLISNFLF). The Cytoplasmic segment spans residues 433–506 (SNPPPAQTSA…TWNGNSTQQM (74 aa)). The tract at residues 437-506 (PAQTSARATS…TWNGNSTQQM (70 aa)) is disordered. A compositionally biased stretch (low complexity) spans 444–456 (ATSTEPSNSASSS). Residues 457 to 489 (KSEKREPVRKRVLEKRGEDFKKEGKIYRLRTQD) are compositionally biased toward basic and acidic residues. At T487 the chain carries Phosphothreonine. Polar residues predominate over residues 496-506 (NTWNGNSTQQM).

Directly interacts with VCP. Interacts with UBQLN1. Forms a complex with VCP and UBQLN1.

The protein resides in the endoplasmic reticulum membrane. The protein localises to the nucleus envelope. In terms of biological role, involved in endoplasmic reticulum-associated protein degradation (ERAD). Acts as a platform to recruit both UBQLN1 and VCP to the ER during ERAD. In Rattus norvegicus (Rat), this protein is UBX domain-containing protein 4 (Ubxn4).